The following is a 142-amino-acid chain: Large ribosomal subunit protein uL16 (142 aa).

It belongs to the universal ribosomal protein uL16 family. As to quaternary structure, part of the 50S ribosomal subunit.

In terms of biological role, binds 23S rRNA and is also seen to make contacts with the A and possibly P site tRNAs. The polypeptide is Large ribosomal subunit protein uL16 (Trichormus variabilis (strain ATCC 29413 / PCC 7937) (Anabaena variabilis)).